We begin with the raw amino-acid sequence, 270 residues long: 4-hydroxy-tetrahydrodipicolinate reductase (270 aa).

Residues 9 to 14 (GAGGRM) and E35 each bind NAD(+). NADP(+) is bound at residue R36. NAD(+) contacts are provided by residues 99 to 101 (GTT) and 123 to 126 (ASNY). Catalysis depends on H156, which acts as the Proton donor/acceptor. H157 lines the (S)-2,3,4,5-tetrahydrodipicolinate pocket. The active-site Proton donor is the K160. Residue 166–167 (GT) coordinates (S)-2,3,4,5-tetrahydrodipicolinate.

It belongs to the DapB family.

The protein resides in the cytoplasm. The enzyme catalyses (S)-2,3,4,5-tetrahydrodipicolinate + NAD(+) + H2O = (2S,4S)-4-hydroxy-2,3,4,5-tetrahydrodipicolinate + NADH + H(+). It catalyses the reaction (S)-2,3,4,5-tetrahydrodipicolinate + NADP(+) + H2O = (2S,4S)-4-hydroxy-2,3,4,5-tetrahydrodipicolinate + NADPH + H(+). It participates in amino-acid biosynthesis; L-lysine biosynthesis via DAP pathway; (S)-tetrahydrodipicolinate from L-aspartate: step 4/4. Its function is as follows. Catalyzes the conversion of 4-hydroxy-tetrahydrodipicolinate (HTPA) to tetrahydrodipicolinate. This chain is 4-hydroxy-tetrahydrodipicolinate reductase, found in Histophilus somni (strain 129Pt) (Haemophilus somnus).